We begin with the raw amino-acid sequence, 524 residues long: Bifunctional purine biosynthesis protein PurH (524 aa).

Positions 1-144 constitute an MGS-like domain; that stretch reads MTRRALVSVS…KNSAHVGVVV (144 aa).

Belongs to the PurH family.

It carries out the reaction (6R)-10-formyltetrahydrofolate + 5-amino-1-(5-phospho-beta-D-ribosyl)imidazole-4-carboxamide = 5-formamido-1-(5-phospho-D-ribosyl)imidazole-4-carboxamide + (6S)-5,6,7,8-tetrahydrofolate. The enzyme catalyses IMP + H2O = 5-formamido-1-(5-phospho-D-ribosyl)imidazole-4-carboxamide. It functions in the pathway purine metabolism; IMP biosynthesis via de novo pathway; 5-formamido-1-(5-phospho-D-ribosyl)imidazole-4-carboxamide from 5-amino-1-(5-phospho-D-ribosyl)imidazole-4-carboxamide (10-formyl THF route): step 1/1. It participates in purine metabolism; IMP biosynthesis via de novo pathway; IMP from 5-formamido-1-(5-phospho-D-ribosyl)imidazole-4-carboxamide: step 1/1. This chain is Bifunctional purine biosynthesis protein PurH, found in Anaeromyxobacter sp. (strain K).